The sequence spans 84 residues: Cytochrome b559 subunit alpha (84 aa).

Residues 24–38 traverse the membrane as a helical segment; it reads IIHAVTLPAIFIAGF. Residue His-26 coordinates heme.

This sequence belongs to the PsbE/PsbF family. Heterodimer of an alpha subunit and a beta subunit. PSII is composed of 1 copy each of membrane proteins PsbA, PsbB, PsbC, PsbD, PsbE, PsbF, PsbH, PsbI, PsbJ, PsbK, PsbL, PsbM, PsbT, PsbX, PsbY, Psb30/Ycf12, peripheral proteins PsbO, CyanoQ (PsbQ), PsbU, PsbV and a large number of cofactors. It forms dimeric complexes. Heme b is required as a cofactor.

It is found in the cellular thylakoid membrane. This b-type cytochrome is tightly associated with the reaction center of photosystem II (PSII). PSII is a light-driven water:plastoquinone oxidoreductase that uses light energy to abstract electrons from H(2)O, generating O(2) and a proton gradient subsequently used for ATP formation. It consists of a core antenna complex that captures photons, and an electron transfer chain that converts photonic excitation into a charge separation. The protein is Cytochrome b559 subunit alpha of Prochlorococcus marinus (strain MIT 9301).